The sequence spans 376 residues: Chaperone protein DnaJ 2 (376 aa).

The region spanning 5 to 70 (DYYEVLGVNR…QKRAAYDRYG (66 aa)) is the J domain. The segment at 135-213 (GADKTIRIPT…CGGAGRVKRQ (79 aa)) adopts a CR-type zinc-finger fold. Zn(2+) contacts are provided by Cys-148, Cys-151, Cys-165, Cys-168, Cys-187, Cys-190, Cys-201, and Cys-204. CXXCXGXG motif repeat units lie at residues 148–155 (CETCHGSG), 165–172 (CPTCGGAG), 187–194 (CPKCHGTG), and 201–208 (CRDCGGAG).

Belongs to the DnaJ family. Homodimer. Requires Zn(2+) as cofactor.

Its subcellular location is the cytoplasm. In terms of biological role, participates actively in the response to hyperosmotic and heat shock by preventing the aggregation of stress-denatured proteins and by disaggregating proteins, also in an autonomous, DnaK-independent fashion. Unfolded proteins bind initially to DnaJ; upon interaction with the DnaJ-bound protein, DnaK hydrolyzes its bound ATP, resulting in the formation of a stable complex. GrpE releases ADP from DnaK; ATP binding to DnaK triggers the release of the substrate protein, thus completing the reaction cycle. Several rounds of ATP-dependent interactions between DnaJ, DnaK and GrpE are required for fully efficient folding. Also involved, together with DnaK and GrpE, in the DNA replication of plasmids through activation of initiation proteins. The polypeptide is Chaperone protein DnaJ 2 (Aromatoleum aromaticum (strain DSM 19018 / LMG 30748 / EbN1) (Azoarcus sp. (strain EbN1))).